Here is a 104-residue protein sequence, read N- to C-terminus: Putative membrane protein insertion efficiency factor (104 aa).

Residues Ser-83 to Ser-104 form a disordered region.

The protein belongs to the UPF0161 family.

It localises to the cell inner membrane. Could be involved in insertion of integral membrane proteins into the membrane. The polypeptide is Putative membrane protein insertion efficiency factor (Chlamydia trachomatis serovar D (strain ATCC VR-885 / DSM 19411 / UW-3/Cx)).